The chain runs to 970 residues: Protein tweety (970 aa).

Over 1–47 the chain is Extracellular; sequence MGDYHEFTDQYKVPVIAKLLHALPHYNITFHKINSTFRPNDEIYLES. 2 N-linked (GlcNAc...) asparagine glycosylation sites follow: Asn-27 and Asn-34. The helical transmembrane segment at 48–68 threads the bilayer; that stretch reads LGILGSVPAALLIVSLLGLLF. At 69-89 the chain is on the cytoplasmic side; the sequence is YLMTRCCDRKPRPAHSITSLK. A helical membrane pass occupies residues 90-110; the sequence is VALSIVTVMCCAAIGLGLYGN. Residues 111 to 219 lie on the Extracellular side of the membrane; that stretch reads DDLHNGLLEV…GDQWELIRWP (109 aa). N-linked (GlcNAc...) asparagine glycans are attached at residues Asn-136, Asn-166, and Asn-183. The chain crosses the membrane as a helical span at residues 220–240; the sequence is GTVATLALLLVLCAVLLVGVA. Residues 241-246 are Cytoplasmic-facing; the sequence is RHSRCA. The helical transmembrane segment at 247-267 threads the bilayer; that stretch reads LILFSVCGLLAVTGSWLMSGL. Over 268–395 the chain is Extracellular; it reads YLSSSVAVGD…RGLCEGGLLG (128 aa). Asn-359 carries N-linked (GlcNAc...) asparagine glycosylation. A helical membrane pass occupies residues 396–416; it reads LVLMLIASFIAAILLTIMVWV. Residues 417 to 970 lie on the Cytoplasmic side of the membrane; sequence DSHTWIYIRK…DESNYAVTEL (554 aa). Positions 532–571 are enriched in low complexity; sequence NAAANMPPTTQAAQQQQQQQAQQQQQQAQQQLGGPQPIYC. 3 disordered regions span residues 532–587, 677–763, and 849–970; these read NAAA…QHPH, RQNS…NESD, and MKAI…VTEL. The segment covering 572 to 587 has biased composition (basic residues); sequence HHPHQHPHPHPHQHPH. 3 stretches are compositionally biased toward low complexity: residues 689 to 700, 707 to 737, and 745 to 759; these read HQHPPSLHQQQQ, QQQQ…QQHH, and QHQQ…QQQP. Residues 852–868 are compositionally biased toward pro residues; that stretch reads IPPPRIGTPTSPPPPVA. Composition is skewed to gly residues over residues 883-894 and 931-945; these read QNGGAVVGGGGA and NGGG…GGGA. A compositionally biased stretch (polar residues) spans 961–970; that stretch reads DESNYAVTEL.

The protein belongs to the tweety family.

It localises to the cell membrane. Non-essential protein that probably acts as a chloride channel. This is Protein tweety (tty) from Drosophila melanogaster (Fruit fly).